We begin with the raw amino-acid sequence, 452 residues long: Eukaryotic translation initiation factor 3 subunit E (452 aa).

A compositionally biased stretch (polar residues) spans M1–T17. Residues M1 to S23 are disordered. A PCI domain is found at P246–S426.

Belongs to the eIF-3 subunit E family. Component of the eukaryotic translation initiation factor 3 (eIF-3) complex.

It localises to the cytoplasm. Component of the eukaryotic translation initiation factor 3 (eIF-3) complex, which is involved in protein synthesis of a specialized repertoire of mRNAs and, together with other initiation factors, stimulates binding of mRNA and methionyl-tRNAi to the 40S ribosome. The eIF-3 complex specifically targets and initiates translation of a subset of mRNAs involved in cell proliferation. This is Eukaryotic translation initiation factor 3 subunit E (int6) from Botryotinia fuckeliana (strain B05.10) (Noble rot fungus).